The following is a 328-amino-acid chain: DNA polymerase IV (328 aa).

A UmuC domain is found at 6 to 187; sequence IIHIDMDYFF…LDIGDFPGVG (182 aa). Residues Asp10 and Asp105 each contribute to the Mg(2+) site. The active site involves Glu106.

This sequence belongs to the DNA polymerase type-Y family. Monomer. The cofactor is Mg(2+).

The protein localises to the cytoplasm. The catalysed reaction is DNA(n) + a 2'-deoxyribonucleoside 5'-triphosphate = DNA(n+1) + diphosphate. In terms of biological role, poorly processive, error-prone DNA polymerase involved in untargeted mutagenesis. Copies undamaged DNA at stalled replication forks, which arise in vivo from mismatched or misaligned primer ends. These misaligned primers can be extended by PolIV. Exhibits no 3'-5' exonuclease (proofreading) activity. May be involved in translesional synthesis, in conjunction with the beta clamp from PolIII. This is DNA polymerase IV from Staphylococcus aureus (strain bovine RF122 / ET3-1).